Reading from the N-terminus, the 328-residue chain is Beta-ketoacyl-[acyl-carrier-protein] synthase III (328 aa).

Active-site residues include Cys122 and His255. An ACP-binding region spans residues 256 to 260 (QANIR). Asn285 is a catalytic residue.

The protein belongs to the thiolase-like superfamily. FabH family. In terms of assembly, homodimer.

The protein resides in the cytoplasm. The enzyme catalyses malonyl-[ACP] + acetyl-CoA + H(+) = 3-oxobutanoyl-[ACP] + CO2 + CoA. It functions in the pathway lipid metabolism; fatty acid biosynthesis. Functionally, catalyzes the condensation reaction of fatty acid synthesis by the addition to an acyl acceptor of two carbons from malonyl-ACP. Catalyzes the first condensation reaction which initiates fatty acid synthesis and may therefore play a role in governing the total rate of fatty acid production. Possesses both acetoacetyl-ACP synthase and acetyl transacylase activities. Its substrate specificity determines the biosynthesis of branched-chain and/or straight-chain of fatty acids. The chain is Beta-ketoacyl-[acyl-carrier-protein] synthase III from Herminiimonas arsenicoxydans.